Consider the following 125-residue polypeptide: MAPAKKGGEKKKGRSAINEVVTREYTINIHKRIHGIGFKKRAPRALKEIRKFAVKEMRTPDVRIDTRLNKAVWAKGIRNVPYRIRVRLSRKRNEDEDSPNKLYTLVTYVPVTNYKGLQTVNVDEN.

Belongs to the eukaryotic ribosomal protein eL31 family. Component of the large ribosomal subunit.

Its subcellular location is the cytoplasm. Its function is as follows. Component of the large ribosomal subunit. The ribosome is a large ribonucleoprotein complex responsible for the synthesis of proteins in the cell. The sequence is that of Large ribosomal subunit protein eL31 (rpl31) from Xenopus laevis (African clawed frog).